We begin with the raw amino-acid sequence, 585 residues long: Trehalase (585 aa).

An N-terminal signal peptide occupies residues 1-32 (MAKTTPMAKPSVGLLTLQVLVFCALTGSLASA). Residues R184 and 191–192 (WD) each bind substrate. N207 carries N-linked (GlcNAc...) asparagine glycosylation. Residues N228, 237–239 (RSQ), 302–304 (RPE), and G336 contribute to the substrate site. The active-site Proton donor/acceptor is the D338. An N-linked (GlcNAc...) asparagine glycan is attached at N348. E535 functions as the Proton donor/acceptor in the catalytic mechanism. Position 550 (E550) interacts with substrate.

This sequence belongs to the glycosyl hydrolase 37 family. As to expression, expressed by the venom gland.

It localises to the secreted. The catalysed reaction is alpha,alpha-trehalose + H2O = alpha-D-glucose + beta-D-glucose. The chain is Trehalase (tre1) from Pimpla hypochondriaca (Parasitoid wasp).